Here is a 268-residue protein sequence, read N- to C-terminus: Shikimate dehydrogenase (NADP(+)) (268 aa).

Shikimate is bound by residues 14–16 and T61; that span reads SKS. K65 serves as the catalytic Proton acceptor. Shikimate-binding residues include N86 and D102. NADP(+) contacts are provided by residues 126–130, 149–154, and M213; these read GAGGA and NRTFSK. Residue Y215 coordinates shikimate. G238 contacts NADP(+).

The protein belongs to the shikimate dehydrogenase family. As to quaternary structure, homodimer.

The catalysed reaction is shikimate + NADP(+) = 3-dehydroshikimate + NADPH + H(+). The protein operates within metabolic intermediate biosynthesis; chorismate biosynthesis; chorismate from D-erythrose 4-phosphate and phosphoenolpyruvate: step 4/7. Its function is as follows. Involved in the biosynthesis of the chorismate, which leads to the biosynthesis of aromatic amino acids. Catalyzes the reversible NADPH linked reduction of 3-dehydroshikimate (DHSA) to yield shikimate (SA). This is Shikimate dehydrogenase (NADP(+)) from Haemophilus influenzae (strain PittEE).